The primary structure comprises 278 residues: Insulin-like growth factor-binding protein-like 1 (278 aa).

Residues 1-25 (MPRLSLLLPLLLLLLLPLLPPLSPS) form the signal peptide. Positions 34-109 (RRPKCGPCRP…PEGTGLCVCA (76 aa)) constitute an IGFBP N-terminal domain. Intrachain disulfides connect Cys-38/Cys-63, Cys-41/Cys-65, Cys-46/Cys-66, Cys-52/Cys-69, Cys-77/Cys-91, Cys-85/Cys-106, and Cys-115/Cys-151. The Kazal-like domain maps to 95–153 (AAGAAPEGTGLCVCAQRGTVCGSDGRSYPSVCALRLRARHTPRAHPGHLHKARDGPCEF). One can recognise an Ig-like C2-type domain in the interval 155–259 (PVVVVPPRSV…GEAESHSTVT (105 aa)). N-linked (GlcNAc...) asparagine glycosylation is present at Asn-166. Cys-176 and Cys-243 are disulfide-bonded.

In terms of tissue distribution, expressed at the highest level in both brain and testis, with lower levels in the prostate, bladder and lung.

It is found in the secreted. IGF-binding proteins prolong the half-life of IGFs and have been shown to either inhibit or stimulate the growth promoting effects of the IGFs in cell culture. They alter the interaction of IGFs with their cell surface receptors. May be a putative tumor suppressor protein. In Homo sapiens (Human), this protein is Insulin-like growth factor-binding protein-like 1 (IGFBPL1).